A 271-amino-acid chain; its full sequence is Elongation factor Ts (271 aa).

Positions 76-79 (TDFV) are involved in Mg(2+) ion dislocation from EF-Tu.

This sequence belongs to the EF-Ts family.

Its subcellular location is the cytoplasm. Its function is as follows. Associates with the EF-Tu.GDP complex and induces the exchange of GDP to GTP. It remains bound to the aminoacyl-tRNA.EF-Tu.GTP complex up to the GTP hydrolysis stage on the ribosome. This chain is Elongation factor Ts, found in Mycolicibacterium gilvum (strain PYR-GCK) (Mycobacterium gilvum (strain PYR-GCK)).